The sequence spans 427 residues: Glutamate-1-semialdehyde 2,1-aminomutase (427 aa).

Lysine 265 bears the N6-(pyridoxal phosphate)lysine mark.

Belongs to the class-III pyridoxal-phosphate-dependent aminotransferase family. HemL subfamily. In terms of assembly, homodimer. The cofactor is pyridoxal 5'-phosphate.

It localises to the cytoplasm. The enzyme catalyses (S)-4-amino-5-oxopentanoate = 5-aminolevulinate. It functions in the pathway porphyrin-containing compound metabolism; protoporphyrin-IX biosynthesis; 5-aminolevulinate from L-glutamyl-tRNA(Glu): step 2/2. In Stutzerimonas stutzeri (strain A1501) (Pseudomonas stutzeri), this protein is Glutamate-1-semialdehyde 2,1-aminomutase.